A 77-amino-acid polypeptide reads, in one-letter code: U-actitoxin-Avd12a (77 aa).

A signal peptide spans 1–23; the sequence is MALFRMLFLCAVLVLLTSKEGMS. Positions 24 to 29 are excised as a propeptide; it reads YEEPEN. Residues 31–73 enclose the EGF-like domain; it reads EGVACTGQYAESFCLNGGTCRYIQSIGEYYCICNGDYTGHRCE. Cystine bridges form between C35–C50, C44–C61, and C63–C72.

The protein belongs to the EGF domain peptide family.

It localises to the secreted. Its subcellular location is the nematocyst. In terms of biological role, has both toxic and EGF activity. Its EGF activity consists of rounding cells (morphological change) and inducing tyrosine phosphorylation of the EGFR in A431 cells, but with a lower potency that human EGF. The chain is U-actitoxin-Avd12a from Anemonia viridis (Snakelocks anemone).